Consider the following 377-residue polypeptide: Glutamate 5-kinase (377 aa).

K18 serves as a coordination point for ATP. Positions 55, 142, and 154 each coordinate substrate. Residues 174-175 (SD) and 216-222 (TGGMKSK) contribute to the ATP site. The PUA domain maps to 281–359 (QGEVVVDAGA…REIEALLGYK (79 aa)).

Belongs to the glutamate 5-kinase family.

It is found in the cytoplasm. It catalyses the reaction L-glutamate + ATP = L-glutamyl 5-phosphate + ADP. It participates in amino-acid biosynthesis; L-proline biosynthesis; L-glutamate 5-semialdehyde from L-glutamate: step 1/2. Functionally, catalyzes the transfer of a phosphate group to glutamate to form L-glutamate 5-phosphate. This is Glutamate 5-kinase from Meiothermus ruber.